The chain runs to 74 residues: Conotoxin MiEr93 (74 aa).

Residues 1-22 form the signal peptide; sequence MKLTCVLIIAVLFLTAYQLATA. Residues 23–45 constitute a propeptide that is removed on maturation; the sequence is ASYAKGKQKHRALRPADKHLRLT. Intrachain disulfides connect cysteine 48/cysteine 62, cysteine 55/cysteine 66, and cysteine 61/cysteine 73.

The protein belongs to the conotoxin O1 superfamily. In terms of tissue distribution, expressed by the venom duct.

It is found in the secreted. In Conus miles (Soldier cone), this protein is Conotoxin MiEr93.